Reading from the N-terminus, the 315-residue chain is Dihydroorotate dehydrogenase (fumarate) (315 aa).

Substrate-binding positions include Lys-46, 70–74, and Asn-130; that span reads NSMGL. 46 to 47 lines the FMN pocket; it reads KS. Residue Asn-130 participates in FMN binding. The Nucleophile role is filled by Cys-133. FMN is bound by residues Lys-167 and Ile-195. 196-197 lines the substrate pocket; it reads NS. FMN-binding positions include Gly-224, 252–253, and 274–275; these read GG and GT.

The protein belongs to the dihydroorotate dehydrogenase family. Type 1 subfamily. In terms of assembly, homodimer. The cofactor is FMN.

Its subcellular location is the cytoplasm. It carries out the reaction (S)-dihydroorotate + fumarate = orotate + succinate. Its pathway is pyrimidine metabolism; UMP biosynthesis via de novo pathway. Its function is as follows. Catalyzes the conversion of dihydroorotate to orotate with fumarate as the electron acceptor. The chain is Dihydroorotate dehydrogenase (fumarate) (URA1) from Kluyveromyces lactis (strain ATCC 8585 / CBS 2359 / DSM 70799 / NBRC 1267 / NRRL Y-1140 / WM37) (Yeast).